The following is a 309-amino-acid chain: Sodium/potassium-transporting ATPase subunit beta-1 (309 aa).

At 1-45 (MSKNNGKGAKGEFEFPQPAKKQTFSEMIYNPQEGTFFGRTGKSWS) the chain is on the cytoplasmic side. A helical; Signal-anchor for type II membrane protein membrane pass occupies residues 46–66 (QLLLFYTIFYIVLAALFTICM). The Extracellular segment spans residues 67–309 (QGLLSTISDT…GSVTFQILLD (243 aa)). N-linked (GlcNAc...) asparagine glycosylation is present at Asn-133. 2 cysteine pairs are disulfide-bonded: Cys-143–Cys-155 and Cys-165–Cys-179. N-linked (GlcNAc...) asparagine glycosylation occurs at Asn-211. A disulfide bridge links Cys-225 with Cys-282.

Belongs to the X(+)/potassium ATPases subunit beta family. The sodium/potassium-transporting ATPase is composed of a catalytic alpha subunit, an auxiliary non-catalytic beta subunit and an additional regulatory subunit. Interacts with nkain. As to expression, in embryos, it is expressed in the neurons of the CNS and PNS, in Garland cells and posterior spiracles. In adults, it is concentrated in the thorax and abdomen (muscle tissue, digestive system and Malpighian tubules) and weakly expressed in the head. Expression is diffuse in the nervous system.

It localises to the cell membrane. This is the non-catalytic component of the active enzyme, which catalyzes the hydrolysis of ATP coupled with the exchange of Na(+) and K(+) ions across the plasma membrane. The beta subunit regulates, through assembly of alpha/beta heterodimers, the number of sodium pumps transported to the plasma membrane. This is Sodium/potassium-transporting ATPase subunit beta-1 (nrv1) from Drosophila melanogaster (Fruit fly).